Here is a 512-residue protein sequence, read N- to C-terminus: Cytochrome P450 monooxygenase 208 (512 aa).

Residues 4-24 (LFLVLDTGAAVLLVALLFVVY) traverse the membrane as a helical segment. A heme-binding site is contributed by C438.

This sequence belongs to the cytochrome P450 family. It depends on heme as a cofactor.

The protein localises to the membrane. It functions in the pathway secondary metabolite biosynthesis. In terms of biological role, cytochrome P450 monooxygenase that is able to use 7-ethoxycoumarin as a substrate for oxidation. The sequence is that of Cytochrome P450 monooxygenase 208 from Postia placenta (strain ATCC 44394 / Madison 698-R) (Brown rot fungus).